Reading from the N-terminus, the 323-residue chain is Beta-ketoacyl-[acyl-carrier-protein] synthase III (323 aa).

Active-site residues include cysteine 113 and histidine 250. Residues 251-255 are ACP-binding; that stretch reads QANRR. The active site involves asparagine 280.

The protein belongs to the thiolase-like superfamily. FabH family. Homodimer.

It localises to the cytoplasm. It carries out the reaction malonyl-[ACP] + acetyl-CoA + H(+) = 3-oxobutanoyl-[ACP] + CO2 + CoA. The protein operates within lipid metabolism; fatty acid biosynthesis. Catalyzes the condensation reaction of fatty acid synthesis by the addition to an acyl acceptor of two carbons from malonyl-ACP. Catalyzes the first condensation reaction which initiates fatty acid synthesis and may therefore play a role in governing the total rate of fatty acid production. Possesses both acetoacetyl-ACP synthase and acetyl transacylase activities. Its substrate specificity determines the biosynthesis of branched-chain and/or straight-chain of fatty acids. In Rhizobium meliloti (strain 1021) (Ensifer meliloti), this protein is Beta-ketoacyl-[acyl-carrier-protein] synthase III.